A 313-amino-acid polypeptide reads, in one-letter code: Homoserine O-succinyltransferase (313 aa).

The active-site Acyl-thioester intermediate is the Cys142. Positions 163 and 192 each coordinate substrate. Catalysis depends on His235, which acts as the Proton acceptor. Glu237 is a catalytic residue. Position 249 (Arg249) interacts with substrate.

It belongs to the MetA family.

The protein localises to the cytoplasm. The enzyme catalyses L-homoserine + succinyl-CoA = O-succinyl-L-homoserine + CoA. Its pathway is amino-acid biosynthesis; L-methionine biosynthesis via de novo pathway; O-succinyl-L-homoserine from L-homoserine: step 1/1. Functionally, transfers a succinyl group from succinyl-CoA to L-homoserine, forming succinyl-L-homoserine. The protein is Homoserine O-succinyltransferase of Vibrio vulnificus (strain CMCP6).